An 852-amino-acid polypeptide reads, in one-letter code: Vacuolar protein sorting-associated protein 16 homolog (852 aa).

It belongs to the VPS16 family. As to quaternary structure, probable core component of at least two putative endosomal tethering complexes, the homotypic fusion and vacuole protein sorting (HOPS) complex and the class C core vacuole/endosome tethering (CORVET) complex. Their common core is composed of the class C Vps proteins vps-11, vps-16 and vps-18, which in HOPS further associates with vps-33.1, vps-39 and vps-41 and in CORVET with vps-8 and vps-33.2.

It localises to the late endosome membrane. Its subcellular location is the lysosome membrane. Its function is as follows. Plays a role in vesicle-mediated protein trafficking to lysosomal compartments including the endocytic membrane transport pathways. Believed to act as a core component of the putative HOPS and CORVET endosomal tethering complexes which are proposed to be involved in the rab-5-to-rab-7 endosome conversion probably implicating sand-1, and via binding SNAREs and SNARE complexes to mediate tethering and docking events during SNARE-mediated membrane fusion. The HOPS complex is proposed to be recruited to rab-7 on the late endosomal membrane and to regulate late endocytic, phagocytic and autophagic traffic towards lysosomes. Within the HOPS complex, contributes to the normal development of gut granules in the adult intestine. The CORVET complex is proposed to function as a rab-5 effector to mediate early endosome fusion probably in specific endosome subpopulations. Required for recruitment of vps-33.1 to the HOPS complex. Required for fusion of endosomes and autophagosomes with lysosomes; the function is dependent on its association with vps-33.1 but not vps-33.2. The protein is Vacuolar protein sorting-associated protein 16 homolog of Caenorhabditis elegans.